We begin with the raw amino-acid sequence, 62 residues long: MTIAFQLAVFALIAISFILLISVPVVFASPEGWSNNKNVVFSGTSLWIGLVFLVGILNSLIS.

The next 2 helical transmembrane spans lie at A8–A28 and F41–I61.

It belongs to the PsbZ family. PSII is composed of 1 copy each of membrane proteins PsbA, PsbB, PsbC, PsbD, PsbE, PsbF, PsbH, PsbI, PsbJ, PsbK, PsbL, PsbM, PsbT, PsbY, PsbZ, Psb30/Ycf12, at least 3 peripheral proteins of the oxygen-evolving complex and a large number of cofactors. It forms dimeric complexes.

It is found in the plastid. The protein resides in the chloroplast thylakoid membrane. In terms of biological role, may control the interaction of photosystem II (PSII) cores with the light-harvesting antenna, regulates electron flow through the 2 photosystem reaction centers. PSII is a light-driven water plastoquinone oxidoreductase, using light energy to abstract electrons from H(2)O, generating a proton gradient subsequently used for ATP formation. The chain is Photosystem II reaction center protein Z from Glycine max (Soybean).